A 361-amino-acid polypeptide reads, in one-letter code: Mannose-1-phosphate guanylyltransferase 1 (361 aa).

Positions 6 and 7 each coordinate GDP-alpha-D-mannose. Residues G9, G11, T12, R13, and K23 each coordinate diphosphate. 5 residues coordinate GDP-alpha-D-mannose: G85, N109, D111, G146, and N173.

This sequence belongs to the transferase hexapeptide repeat family. In terms of assembly, interacts in vitro with CSN5A and CSN5B, but in planta only with CSN5B, which targets CYT1 for degradation in the dark by the 26S proteasome. Forms homodimers in the unliganded structure. The product-bound structure is composed of six dimers that form a dodecameric assembly.

Its subcellular location is the cytoplasm. The protein resides in the nucleus. The enzyme catalyses alpha-D-mannose 1-phosphate + GTP + H(+) = GDP-alpha-D-mannose + diphosphate. It functions in the pathway nucleotide-sugar biosynthesis; GDP-alpha-D-mannose biosynthesis; GDP-alpha-D-mannose from alpha-D-mannose 1-phosphate (GTP route): step 1/1. Functionally, essential protein during embryogenesis. Catalyzes a reaction of the Smirnoff-Wheeler pathway, the major route to ascorbate biosynthesis in plants. Plays an essential role in plant growth and development and cell-wall architecture. Provides GDP-mannose, used for cell wall carbohydrate biosynthesis, protein N-glycosylation, as well as for the biosynthesis of the antioxidant ascorbate. The polypeptide is Mannose-1-phosphate guanylyltransferase 1 (Arabidopsis thaliana (Mouse-ear cress)).